Here is a 553-residue protein sequence, read N- to C-terminus: Pseudouridylate synthase RPUSD2 (553 aa).

The interval 76-135 (AVGKQVPESGDQAQGGEGQLPSNGEQTPAPVADSGKRKKRRGATGERVVPPPKKRRTGVS) is disordered. Aspartate 287 is an active-site residue. A Phosphothreonine modification is found at threonine 490.

The protein belongs to the pseudouridine synthase RluA family.

The enzyme catalyses a uridine in mRNA = a pseudouridine in mRNA. Its function is as follows. Pseudouridine synthase that catalyzes pseudouridylation of mRNAs. In Mus musculus (Mouse), this protein is Pseudouridylate synthase RPUSD2.